A 234-amino-acid chain; its full sequence is Ribonuclease HII (234 aa).

One can recognise an RNase H type-2 domain in the interval 47 to 234; it reads IRIAGVDEVG…KTVHKILYQE (188 aa). A divalent metal cation contacts are provided by Asp-53, Glu-54, and Asp-144.

It belongs to the RNase HII family. Requires Mn(2+) as cofactor. It depends on Mg(2+) as a cofactor.

Its subcellular location is the cytoplasm. The enzyme catalyses Endonucleolytic cleavage to 5'-phosphomonoester.. Its function is as follows. Endonuclease that specifically degrades the RNA of RNA-DNA hybrids. The sequence is that of Ribonuclease HII from Ruegeria pomeroyi (strain ATCC 700808 / DSM 15171 / DSS-3) (Silicibacter pomeroyi).